The sequence spans 161 residues: Urease accessory protein UreE (161 aa).

It belongs to the UreE family. In terms of assembly, homodimer.

The protein localises to the cytoplasm. Involved in urease metallocenter assembly. Binds nickel. Probably functions as a nickel donor during metallocenter assembly. It is not essential for urease activity. In Proteus mirabilis (strain HI4320), this protein is Urease accessory protein UreE.